Reading from the N-terminus, the 70-residue chain is Protein SlyX homolog (70 aa).

This sequence belongs to the SlyX family.

The protein is Protein SlyX homolog of Shewanella denitrificans (strain OS217 / ATCC BAA-1090 / DSM 15013).